We begin with the raw amino-acid sequence, 219 residues long: Uracil-DNA glycosylase (219 aa).

The Proton acceptor role is filled by Asp-61.

Belongs to the uracil-DNA glycosylase (UDG) superfamily. UNG family.

The protein resides in the cytoplasm. It catalyses the reaction Hydrolyzes single-stranded DNA or mismatched double-stranded DNA and polynucleotides, releasing free uracil.. Functionally, excises uracil residues from the DNA which can arise as a result of misincorporation of dUMP residues by DNA polymerase or due to deamination of cytosine. This Exiguobacterium sibiricum (strain DSM 17290 / CCUG 55495 / CIP 109462 / JCM 13490 / 255-15) protein is Uracil-DNA glycosylase.